The sequence spans 607 residues: Putative pentatricopeptide repeat-containing protein At1g09680 (607 aa).

PPR repeat units follow at residues 239–273 (NVYV…SLQP), 274–308 (TVVS…RTRP), 309–343 (DVFT…GLIP), 344–378 (NDVI…GLQP), 379–413 (DIVL…GLRP), 414–448 (DKIT…GIEL), 449–483 (DRVG…GIKP), 484–518 (DDVT…GHVP), and 519–553 (SVVT…GVVP).

The protein belongs to the PPR family. P subfamily.

The polypeptide is Putative pentatricopeptide repeat-containing protein At1g09680 (Arabidopsis thaliana (Mouse-ear cress)).